Consider the following 336-residue polypeptide: tRNA N6-adenosine threonylcarbamoyltransferase (336 aa).

Positions 114 and 118 each coordinate Fe cation. Substrate is bound by residues 136–140, aspartate 169, glycine 182, aspartate 186, and asparagine 275; that span reads LVSGG. Aspartate 301 contributes to the Fe cation binding site.

It belongs to the KAE1 / TsaD family. Requires Fe(2+) as cofactor.

Its subcellular location is the cytoplasm. The enzyme catalyses L-threonylcarbamoyladenylate + adenosine(37) in tRNA = N(6)-L-threonylcarbamoyladenosine(37) in tRNA + AMP + H(+). Functionally, required for the formation of a threonylcarbamoyl group on adenosine at position 37 (t(6)A37) in tRNAs that read codons beginning with adenine. Is involved in the transfer of the threonylcarbamoyl moiety of threonylcarbamoyl-AMP (TC-AMP) to the N6 group of A37, together with TsaE and TsaB. TsaD likely plays a direct catalytic role in this reaction. The chain is tRNA N6-adenosine threonylcarbamoyltransferase from Streptococcus pneumoniae (strain Hungary19A-6).